A 766-amino-acid chain; its full sequence is Single-minded homolog 1 (766 aa).

The bHLH domain maps to 1-53 (MKEKSKNAARTRREKENSEFYELAKLLPLPSAITSQLDKASIIRLTTSYLKMR). PAS domains lie at 77–147 (GREL…QPYH) and 218–288 (PPSA…LVKG). The region spanning 292–335 (TKYYRFLAKHGGWVWVQSYATIVHNSRSSRPHCIVSVNYVLTDT) is the PAC domain. A Single-minded C-terminal domain is found at 336–766 (EYKGLQLSLD…GTSVIITNGS (431 aa)). Residues 353–365 (AFSYTSSSTPTMT) show a composition bias toward polar residues. Disordered regions lie at residues 353–431 (AFSY…SQHD) and 528–563 (WDED…EPSK). The Nuclear localization signal motif lies at 368-387 (RKGAKSRLSSSKSKSRTSPY). Low complexity predominate over residues 373-385 (SRLSSSKSKSRTS). A compositionally biased stretch (basic and acidic residues) spans 394 to 404 (HTERSESDHDS).

As to quaternary structure, efficient DNA binding requires dimerization with another bHLH protein. Heterodimer; forms a heterodimer with ARNT, ARNT2.

The protein resides in the nucleus. In terms of biological role, transcriptional factor that may have pleiotropic effects during embryogenesis and in the adult. The polypeptide is Single-minded homolog 1 (SIM1) (Pan paniscus (Pygmy chimpanzee)).